The following is a 103-amino-acid chain: Enhancer of rudimentary homolog (103 aa).

This sequence belongs to the E(R) family. As to quaternary structure, homodimer.

In terms of biological role, may have a role in the cell cycle. The polypeptide is Enhancer of rudimentary homolog (Caenorhabditis elegans).